Consider the following 79-residue polypeptide: Sec-independent protein translocase protein TatA (79 aa).

A helical transmembrane segment spans residues 1–21 (MGGFTSIWHWVIVLLVIVLLF). The interval 54–79 (ELKTLDAQATQTKVHETSEIKSKQES) is disordered. The span at 66 to 79 (KVHETSEIKSKQES) shows a compositional bias: basic and acidic residues.

Belongs to the TatA/E family. In terms of assembly, the Tat system comprises two distinct complexes: a TatABC complex, containing multiple copies of TatA, TatB and TatC subunits, and a separate TatA complex, containing only TatA subunits. Substrates initially bind to the TatABC complex, which probably triggers association of the separate TatA complex to form the active translocon.

The protein resides in the cell inner membrane. Its function is as follows. Part of the twin-arginine translocation (Tat) system that transports large folded proteins containing a characteristic twin-arginine motif in their signal peptide across membranes. TatA could form the protein-conducting channel of the Tat system. This chain is Sec-independent protein translocase protein TatA, found in Helicobacter pylori (strain J99 / ATCC 700824) (Campylobacter pylori J99).